The primary structure comprises 831 residues: MGAPALLWPSLLLPWLTVLFGQPPGTLAQTQVCSVNQTIFRVEENTTVSEPLVNIFVPDGLHVTLGPLSTPYAFRIEGKDLFLNVTPDYEENSLLQADVECKRGDAVVVRLEVFVAVLDINDNAPKFSFEIKTFNVSEDTKVNTTVIPETQLKATDADINDILVYTLQEVTPNASKFFSLEGVNYPALKLDQTLDYFKNQNMTFMLLARDTWEENVEPSHTATATLVLNTLPADLRTPWFLPCSFTDGYVCIHAQYSAVVPTGHKLPSPLIMSPGPIYAVDGDQAINQSIIYSIIAGNTDGTFIINAHDGNLTMTKSIPSPMKFTLLIRADQEDMAQYSVTQAIVEARSVTGNPLQFSQSLYYGTVVLGSEAGTAVKDKTFPSEILRIQAQYPGFPDLNSAVTYRVTNSSEFMMNKDIMLTAVPMEEARTIRVEVEASNTVTKDTATAVVEIQVSERERTPTPPEAGGTTGPSSNTTMEAPLTSGTSQRPATTSSGGSVGPFPPGGTTLRPPTPASSIPGGSPTLGTSTSPQTTTPGGDSAQTPKPGTSHPTAPTSRTSTSLMTTSSRSDSTQTPKPGTSQPMVPIPGASTSSQPATPSGSSPQTPKPGTSQSTATGPISLPSTGAGEQGDGQRFSTVDMAVLGGVLGALLLLALICLVILVHKHYRHRLACCSGKASEPQPSGYDNLTFLPDHKAKWSPTPNRKPEPSPKLAQPPLRPPSPMSSSPTPPSSTPPSPQPKASGSPKTVQAGDSPSAVRSILTKERRPEGEGGYKAVWFGKDIGAEADVVVLNEPTADVDSASASGSEGSDDDDPDQKKTLRFGVDADNTYI.

The N-terminal stretch at 1 to 28 is a signal peptide; sequence MGAPALLWPSLLLPWLTVLFGQPPGTLA. The Extracellular portion of the chain corresponds to 29–641; the sequence is QTQVCSVNQT…GQRFSTVDMA (613 aa). 11 N-linked (GlcNAc...) asparagine glycosylation sites follow: Asn-36, Asn-45, Asn-84, Asn-135, Asn-143, Asn-173, Asn-201, Asn-287, Asn-311, Asn-408, and Asn-475. Cadherin domains follow at residues 53–125, 128–240, 252–357, and 358–459; these read VNIF…DNAP, SFEI…TPWF, IHAQ…PLQF, and SQSL…ERER. The tract at residues 452–632 is disordered; that stretch reads IQVSERERTP…STGAGEQGDG (181 aa). The span at 473-491 shows a compositional bias: polar residues; sequence SSNTTMEAPLTSGTSQRPA. Low complexity predominate over residues 505-540; sequence GGTTLRPPTPASSIPGGSPTLGTSTSPQTTTPGGDS. Residues 541 to 554 are compositionally biased toward polar residues; the sequence is AQTPKPGTSHPTAP. A run of 2 repeats spans residues 541-571 and 572-602. Positions 541–614 are 3 X 31 AA approximate tandem repeats; sequence AQTPKPGTSH…TPKPGTSQST (74 aa). Low complexity predominate over residues 555-572; it reads TSRTSTSLMTTSSRSDST. Composition is skewed to polar residues over residues 573 to 582 and 589 to 623; these read QTPKPGTSQP and ASTSSQPATPSGSSPQTPKPGTSQSTATGPISLPS. The 3; truncated repeat unit spans residues 605 to 614; the sequence is TPKPGTSQST. The chain crosses the membrane as a helical span at residues 642 to 662; it reads VLGGVLGALLLLALICLVILV. Over 663–831 the chain is Cytoplasmic; that stretch reads HKHYRHRLAC…FGVDADNTYI (169 aa). Residues 663 to 831 are mediates interaction with USH1C and MYO7B and is required for proper localization to microvilli tips and function in microvilli organization; that stretch reads HKHYRHRLAC…FGVDADNTYI (169 aa). 2 disordered regions span residues 675-774 and 793-831; these read GKAS…GGYK and EPTADVDSASASGSEGSDDDDPDQKKTLRFGVDADNTYI. A phosphoserine mark is found at Ser-699, Ser-721, and Ser-725. Residues 716–738 are compositionally biased toward pro residues; the sequence is PLRPPSPMSSSPTPPSSTPPSPQ. At Thr-728 the chain carries Phosphothreonine. Ser-736 and Ser-753 each carry phosphoserine. Basic and acidic residues predominate over residues 761-771; it reads LTKERRPEGEG. Thr-795 carries the post-translational modification Phosphothreonine. The segment covering 797-807 has biased composition (low complexity); sequence DVDSASASGSE. Residues Ser-802, Ser-804, and Ser-806 each carry the phosphoserine modification.

Part of the IMAC/intermicrovillar adhesion complex/intermicrovillar tip-link complex composed of ANKS4B, MYO7B, USH1C, CDHR2 and CDHR5. Interacts (via cytoplasmic domain) with USH1C and MYO7B; required for proper localization of CDHR5 to microvilli tips and its function in brush border differentiation. Post-translationally, N- and O-glycosylated.

The protein localises to the apical cell membrane. It is found in the cell projection. The protein resides in the microvillus membrane. Intermicrovillar adhesion molecule that forms, via its extracellular domain, calcium-dependent heterophilic complexes with CDHR2 on adjacent microvilli. Thereby, controls the packing of microvilli at the apical membrane of epithelial cells. Through its cytoplasmic domain, interacts with microvillus cytoplasmic proteins to form the intermicrovillar adhesion complex/IMAC. This complex plays a central role in microvilli and epithelial brush border differentiation. This Mus musculus (Mouse) protein is Cadherin-related family member 5.